The following is a 196-amino-acid chain: uncharacterized protein (196 aa).

This is an uncharacterized protein from Methanocaldococcus jannaschii (strain ATCC 43067 / DSM 2661 / JAL-1 / JCM 10045 / NBRC 100440) (Methanococcus jannaschii).